The chain runs to 159 residues: Small ribosomal subunit protein uS19 (159 aa).

Belongs to the universal ribosomal protein uS19 family.

Protein S19 forms a complex with S13 that binds strongly to the 16S ribosomal RNA. The protein is Small ribosomal subunit protein uS19 of Pyrobaculum arsenaticum (strain DSM 13514 / JCM 11321 / PZ6).